Here is a 423-residue protein sequence, read N- to C-terminus: Adenylosuccinate synthetase (423 aa).

GTP contacts are provided by residues 11–17 and 39–41; these read GDEGKGK and GHT. Asp-12 serves as the catalytic Proton acceptor. Mg(2+) is bound by residues Asp-12 and Gly-39. IMP contacts are provided by residues 12-15, 37-40, Thr-129, Arg-143, Asn-219, Thr-234, and Arg-298; these read DEGK and NAGH. His-40 serves as the catalytic Proton donor. A substrate-binding site is contributed by 294 to 300; that stretch reads VTTGRRR. Residues Arg-300, 326–328, and 411–413 contribute to the GTP site; these read KLD and GTG.

The protein belongs to the adenylosuccinate synthetase family. As to quaternary structure, homodimer. It depends on Mg(2+) as a cofactor.

The protein resides in the cytoplasm. The enzyme catalyses IMP + L-aspartate + GTP = N(6)-(1,2-dicarboxyethyl)-AMP + GDP + phosphate + 2 H(+). Its pathway is purine metabolism; AMP biosynthesis via de novo pathway; AMP from IMP: step 1/2. Plays an important role in the de novo pathway and in the salvage pathway of purine nucleotide biosynthesis. Catalyzes the first committed step in the biosynthesis of AMP from IMP. The protein is Adenylosuccinate synthetase of Penicillium rubens (strain ATCC 28089 / DSM 1075 / NRRL 1951 / Wisconsin 54-1255) (Penicillium chrysogenum).